Here is a 363-residue protein sequence, read N- to C-terminus: Fructose-1,6-bisphosphate aldolase/phosphatase (363 aa).

The active-site Proton acceptor; for FBP phosphatase activity is Asp-11. Mg(2+) contacts are provided by Asp-11, His-18, Asp-51, and Asp-52. Position 18 (His-18) interacts with beta-D-fructose 1,6-bisphosphate. Residue His-18 coordinates dihydroxyacetone phosphate. Tyr-89 provides a ligand contact to beta-D-fructose 1,6-bisphosphate. Mg(2+) is bound at residue Gln-93. 102–103 (GN) contacts beta-D-fructose 1,6-bisphosphate. Asp-130 lines the Mg(2+) pocket. Lys-131 provides a ligand contact to beta-D-fructose 1,6-bisphosphate. Dihydroxyacetone phosphate is bound at residue Lys-131. Tyr-230 acts as the Proton donor/acceptor; for FBP aldolase activity in catalysis. Mg(2+)-binding residues include Lys-233, Asp-234, and Asp-235. The active-site Schiff-base intermediate with DHAP; for FBP aldolase activity is Lys-233. Beta-D-fructose 1,6-bisphosphate-binding positions include 243 to 244 (QK), Arg-267, and Tyr-348. Arg-267 contacts dihydroxyacetone phosphate.

It belongs to the FBP aldolase/phosphatase family. In terms of assembly, homooctamer; dimer of tetramers. It depends on Mg(2+) as a cofactor.

The enzyme catalyses beta-D-fructose 1,6-bisphosphate + H2O = beta-D-fructose 6-phosphate + phosphate. It catalyses the reaction beta-D-fructose 1,6-bisphosphate = D-glyceraldehyde 3-phosphate + dihydroxyacetone phosphate. Its pathway is carbohydrate biosynthesis; gluconeogenesis. Its function is as follows. Catalyzes two subsequent steps in gluconeogenesis: the aldol condensation of dihydroxyacetone phosphate (DHAP) and glyceraldehyde-3-phosphate (GA3P) to fructose-1,6-bisphosphate (FBP), and the dephosphorylation of FBP to fructose-6-phosphate (F6P). This Thermus thermophilus (strain ATCC BAA-163 / DSM 7039 / HB27) protein is Fructose-1,6-bisphosphate aldolase/phosphatase.